The primary structure comprises 1035 residues: Cell-division control histidine kinase PdhS (1035 aa).

Positions 1–613 (MSGSYPFIDI…HADGSEEPVD (613 aa)) are important for polar localization. Residues 500–533 (QGLANTRAESETPVSETSSIEPVEPTPPVKTRSE) are disordered. An interaction with DivK region spans residues 614–1035 (THLNAIAWRG…VFPPTRVLAD (422 aa)). The 72-residue stretch at 659 to 730 (HVEELKTILD…YLHGLSGNGV (72 aa)) folds into the PAS domain. The region spanning 802–1031 (RISHEIRTPL…VVEIVFPPTR (230 aa)) is the Histidine kinase domain. At His805 the chain carries Phosphohistidine; by autocatalysis.

Interacts with DivK.

It localises to the cytoplasm. The catalysed reaction is ATP + protein L-histidine = ADP + protein N-phospho-L-histidine.. Functions as a polar differentiation marker. Essential protein that, by localizing in the old pole of dividing cells, controls cell division and maturation, probably through control of DivK phosphorylation status and cellular distribution, which in turn regulates CtrA, a transcriptional regulator of the minB operon. The asymmetrical localization of this protein is probably required for cells to enter a new division cycle. The sequence is that of Cell-division control histidine kinase PdhS (pdhS) from Brucella suis (strain ATCC 23445 / NCTC 10510).